The primary structure comprises 213 residues: Protein DMP3 (213 aa).

Residues 1-27 are disordered; it reads MSSPSSLTQRNPTSSQEQSESVPQLRR. A run of 4 helical transmembrane segments spans residues 45-65, 74-94, 136-156, and 176-196; these read LANL…PVFT, TQVL…LSSF, IRII…AVAL, and VLDI…LVFP.

Belongs to the plant DMP1 protein family. In terms of tissue distribution, expressed in leaves, siliques and roots (e.g. root hairs).

It is found in the endoplasmic reticulum membrane. Its function is as follows. Involved in membrane remodeling. The chain is Protein DMP3 from Arabidopsis thaliana (Mouse-ear cress).